Here is a 420-residue protein sequence, read N- to C-terminus: MTKWKRANPNGTRDYLFEECTLIEEVEQKLRRTFLERGYEEIRTPTIEFYDVFAFQSRPIDEEKMYKFFDEKGRIIVLRPDMTIPLARVIGTQRCDTPLKVTYSGNVFRANESLTGKYNEIVQSGIEIIGIDNVRAEIECVISVIQSLQKLKVQSFTIEIGQVQLYKCIVKKLSIHEEEEKVLRTYIESKNYAALSNFIRDKKLDRCDETVKLLEKLPRLFGNLEVIEEAEKLASSNEMKMAITRVKEIYEAIDKLGYGSYISIDLGMIQHLDYYTGVIFKGYIYEIGEEIVSGGRYDELIGNFGEMLPAVGLAVQVNQIVKALQEQQKPYERKRIDIMIHYELNRLAEAERLRNLLQKDGKKVALSLFSNLNDTFQFARKNQIVTVVEAKNESLVEYVWKEKWVVQKEGETSCVTFKLR.

This sequence belongs to the class-II aminoacyl-tRNA synthetase family. HisZ subfamily. In terms of assembly, heteromultimer composed of HisG and HisZ subunits.

It localises to the cytoplasm. Its pathway is amino-acid biosynthesis; L-histidine biosynthesis; L-histidine from 5-phospho-alpha-D-ribose 1-diphosphate: step 1/9. Required for the first step of histidine biosynthesis. May allow the feedback regulation of ATP phosphoribosyltransferase activity by histidine. This chain is ATP phosphoribosyltransferase regulatory subunit, found in Bacillus cereus (strain AH187).